Consider the following 334-residue polypeptide: Glyceraldehyde-3-phosphate dehydrogenase 1 (334 aa).

NAD(+)-binding positions include 11–12, Asp-33, Arg-77, and Ser-119; that span reads RI. Residues 150–152 and Thr-181 each bind D-glyceraldehyde 3-phosphate; that span reads SCT. Catalysis depends on Cys-151, which acts as the Nucleophile. Residue Asn-182 coordinates NAD(+). D-glyceraldehyde 3-phosphate-binding positions include Arg-196, 209-210, and Arg-232; that span reads TG. Asn-314 is an NAD(+) binding site.

This sequence belongs to the glyceraldehyde-3-phosphate dehydrogenase family. Homotetramer.

The protein localises to the cytoplasm. It catalyses the reaction D-glyceraldehyde 3-phosphate + phosphate + NAD(+) = (2R)-3-phospho-glyceroyl phosphate + NADH + H(+). It functions in the pathway carbohydrate degradation; glycolysis; pyruvate from D-glyceraldehyde 3-phosphate: step 1/5. In terms of biological role, catalyzes the oxidative phosphorylation of glyceraldehyde 3-phosphate (G3P) to 1,3-bisphosphoglycerate (BPG) using the cofactor NAD. The first reaction step involves the formation of a hemiacetal intermediate between G3P and a cysteine residue, and this hemiacetal intermediate is then oxidized to a thioester, with concomitant reduction of NAD to NADH. The reduced NADH is then exchanged with the second NAD, and the thioester is attacked by a nucleophilic inorganic phosphate to produce BPG. In Bacillus cereus, this protein is Glyceraldehyde-3-phosphate dehydrogenase 1 (gap1).